A 241-amino-acid polypeptide reads, in one-letter code: Terpene cyclase olcD (241 aa).

The next 7 helical transmembrane spans lie at 19-39 (LSDI…FATI), 49-71 (WMPL…LYPP), 76-95 (ILGF…LRFA), 108-128 (YLPV…LALI), 137-157 (FYYG…SGLV), 166-186 (SYTI…GLFF), and 202-222 (LMRW…VQFW).

This sequence belongs to the paxB family.

It is found in the membrane. Its pathway is secondary metabolite biosynthesis; terpenoid biosynthesis. Functionally, terpene cyclase; part of the gene cluster that mediates the biosynthesis of 15-deoxyoxalicine B. The first step of the pathway is the synthesis of nicotinyl-CoA from nicotinic acid by the nicotinic acid-CoA ligase olcI. Nicotinyl-CoA is then a substrate of polyketide synthase olcA to produce 4-hydroxy-6-(3-pyridinyl)-2H-pyran-2-one (HPPO) which is further prenylated by the polyprenyl transferase olcH to yield geranylgeranyl-HPPO. Geranylgeranyl pyrophosphate is provided by the cluster-specific geranylgeranyl pyrophosphate synthase olcC. The FAD-dependent monooxygenase olcE catalyzes the epoxidation of geranylgeranyl-HPPO and the terpene cyclase olcD catalyzes the cyclization of the terpenoid component, resulting in the formation of the tricyclic terpene moiety seen in predecaturin E. The cytochrome P450 monooxygenase then catalyzes the allylic oxidation of predecaturin E, which is followed by spirocylization with concomitant loss of one molecule of water to form decaturin E. Decaturin E is the substrate of the cytochrome P450 monooxygenase olcJ which hydroxylates it at the C-29 position to form decaturin F. The short-chain dehydrogenase/reductase olcF may catalyze the oxidation of decaturin F to generate the 29-hydroxyl-27-one intermediate, and subsequent hemiacetal formation probably leads to the formation of decaturin C. The dioxygenase olcK may be a peroxisomal enzyme that catalyzes the hydroxylation of decaturin C into decaturin A once decaturin C is shuttled into the peroxisome by the MFS transporter olcL. Finally the cytochrome P450 monooxygenase olcB catalyzes the oxidative rearrangement to yield 15-deoxyoxalicine B. In the absence of olcJ, decaturin E may be shunted to a pathway in which it is oxidized to a ketone, possibly by olcF, to form decaturin D, which undergoes further allylic oxidation to yield decaturin G. Moreover, in the absence of oclK or oclL, oclB can convert decaturin C into 15-deoxyoxalicine A. The polypeptide is Terpene cyclase olcD (Penicillium canescens).